The primary structure comprises 876 residues: Alanine--tRNA ligase (876 aa).

An N6-acetyllysine modification is found at lysine 74. Positions 564, 568, 666, and 670 each coordinate Zn(2+).

This sequence belongs to the class-II aminoacyl-tRNA synthetase family. As to quaternary structure, homotetramer. Zn(2+) serves as cofactor.

It is found in the cytoplasm. The enzyme catalyses tRNA(Ala) + L-alanine + ATP = L-alanyl-tRNA(Ala) + AMP + diphosphate. Catalyzes the attachment of alanine to tRNA(Ala) in a two-step reaction: alanine is first activated by ATP to form Ala-AMP and then transferred to the acceptor end of tRNA(Ala). Also edits incorrectly charged Ser-tRNA(Ala) and Gly-tRNA(Ala) via its editing domain. The protein is Alanine--tRNA ligase of Escherichia coli O6:K15:H31 (strain 536 / UPEC).